The primary structure comprises 771 residues: Caldesmon (771 aa).

2 disordered regions span residues 23-91 (ERLS…ALLE) and 104-599 (LQEA…FSPK). Residues 26–199 (SYQRNDDDEE…PKEVPTEENQ (174 aa)) form a myosin and calmodulin-binding region. At Tyr-27 the chain carries Phosphotyrosine. 9 stretches are compositionally biased toward basic and acidic residues: residues 47–67 (QERL…EKSE), 104–115 (LQEALERQKEFD), 139–155 (ITGK…RCEI), 170–194 (WRQD…KEVP), 203–215 (AVEK…EVVE), 240–435 (AADK…ESLP), 442–484 (SKKD…RELT), 509–518 (GSEKLKEKQQ), and 525–592 (DELK…EKKP). 10 tandem repeats follow at residues 251-265 (EREK…RLKA), 266-278 (EEEK…KQKA), 279-291 (EEEK…RERA), 294-306 (EEEK…RERA), 309-321 (EEER…RERA), 324-336 (EEER…RAKA), 337-349 (EEER…RAKA), 350-362 (EEER…RAKA), 363-375 (EKER…RERA), and 378-390 (EEEK…KARL). A 10 X 13 AA approximate tandem repeats region spans residues 251–390 (EREKLEAEEK…KRAAEEKARL (140 aa)). Positions 523 to 580 (ELDELKKRREERRKILEEEEQKKKQEEAERKIREEEEKKRMKEEIERRRAEAAEKRQK) are tropomyosin-binding. Position 597 is a phosphoserine; by CDK1 (Ser-597). Positions 612 to 644 (LNKSAQKSGMKPAHTTAVVSKIDSRLEQYTSAV) are strong actin-binding. A tropomyosin-binding region spans residues 622–632 (KPAHTTAVVSK). Residue Tyr-640 is modified to Phosphotyrosine. Residues 674–680 (WEKGNVF) are calmodulin-binding. Residues 676-771 (KGNVFSSPGG…NGLRQFEKEP (96 aa)) form a disordered region. The span at 679–691 (VFSSPGGTGTPNK) shows a compositional bias: polar residues. The residue at position 682 (Ser-682) is a Phosphoserine; by CDK1. Thr-688 and Thr-711 each carry phosphothreonine; by CDK1. Residue Ser-717 is modified to Phosphoserine; by CDK1. The span at 723-742 (SDLRPGDVSGKRNLWEKQSV) shows a compositional bias: basic and acidic residues. The weak actin-binding stretch occupies residues 726 to 752 (RPGDVSGKRNLWEKQSVEKPAASSSKV).

It belongs to the caldesmon family. Post-translationally, phosphorylated in non-muscle cells. Phosphorylation by CDK1 during mitosis causes caldesmon to dissociate from microfilaments. Phosphorylation reduces caldesmon binding to actin, myosin, and calmodulin as well as its inhibition of actomyosin ATPase activity. Phosphorylation also occurs in both quiescent and dividing smooth muscle cells with similar effects on the interaction with actin and calmodulin and on microfilaments reorganization. High-molecular-weight caldesmon (h-caldesmon) is predominantly expressed in smooth muscles, whereas low-molecular-weight caldesmon (l-caldesmon) is widely distributed in non-muscle tissues and cells. Not expressed in skeletal muscle or heart.

It localises to the cytoplasm. The protein resides in the cytoskeleton. It is found in the myofibril. Its subcellular location is the stress fiber. Actin- and myosin-binding protein implicated in the regulation of actomyosin interactions in smooth muscle and nonmuscle cells (could act as a bridge between myosin and actin filaments). Stimulates actin binding of tropomyosin which increases the stabilization of actin filament structure. In muscle tissues, inhibits the actomyosin ATPase by binding to F-actin. This inhibition is attenuated by calcium-calmodulin and is potentiated by tropomyosin. Interacts with actin, myosin, two molecules of tropomyosin and with calmodulin. Also plays an essential role during cellular mitosis and receptor capping. This Gallus gallus (Chicken) protein is Caldesmon (CALD1).